A 275-amino-acid chain; its full sequence is Formamidopyrimidine-DNA glycosylase (275 aa).

Catalysis depends on Pro-2, which acts as the Schiff-base intermediate with DNA. Residue Glu-3 is the Proton donor of the active site. Lys-60 acts as the Proton donor; for beta-elimination activity in catalysis. The DNA site is built by His-93 and Arg-112. The segment at 240 to 274 (FVYGRKDEPCKKCGSPIEKTVVGGRGTHFCIKCQK) adopts an FPG-type zinc-finger fold. Residue Arg-264 is the Proton donor; for delta-elimination activity of the active site.

This sequence belongs to the FPG family. Monomer. Zn(2+) is required as a cofactor.

The catalysed reaction is Hydrolysis of DNA containing ring-opened 7-methylguanine residues, releasing 2,6-diamino-4-hydroxy-5-(N-methyl)formamidopyrimidine.. It catalyses the reaction 2'-deoxyribonucleotide-(2'-deoxyribose 5'-phosphate)-2'-deoxyribonucleotide-DNA = a 3'-end 2'-deoxyribonucleotide-(2,3-dehydro-2,3-deoxyribose 5'-phosphate)-DNA + a 5'-end 5'-phospho-2'-deoxyribonucleoside-DNA + H(+). Functionally, involved in base excision repair of DNA damaged by oxidation or by mutagenic agents. Acts as a DNA glycosylase that recognizes and removes damaged bases. Has a preference for oxidized purines, such as 7,8-dihydro-8-oxoguanine (8-oxoG). Has AP (apurinic/apyrimidinic) lyase activity and introduces nicks in the DNA strand. Cleaves the DNA backbone by beta-delta elimination to generate a single-strand break at the site of the removed base with both 3'- and 5'-phosphates. This Bacillus licheniformis (strain ATCC 14580 / DSM 13 / JCM 2505 / CCUG 7422 / NBRC 12200 / NCIMB 9375 / NCTC 10341 / NRRL NRS-1264 / Gibson 46) protein is Formamidopyrimidine-DNA glycosylase.